The chain runs to 635 residues: DNA topoisomerase 4 subunit B (635 aa).

ATP contacts are provided by residues Tyr-5, Asn-45, Asp-72, 113–119 (GLHGVGA), and Lys-340. In terms of domain architecture, Toprim spans 422-537 (RELFVVEGDS…KGHIYLALPP (116 aa)). Positions 428, 502, and 504 each coordinate Mg(2+).

It belongs to the type II topoisomerase family. ParE type 2 subfamily. As to quaternary structure, heterotetramer composed of ParC and ParE. Requires Mg(2+) as cofactor. The cofactor is Mn(2+). It depends on Ca(2+) as a cofactor.

The enzyme catalyses ATP-dependent breakage, passage and rejoining of double-stranded DNA.. Functionally, topoisomerase IV is essential for chromosome segregation. It relaxes supercoiled DNA. Performs the decatenation events required during the replication of a circular DNA molecule. The chain is DNA topoisomerase 4 subunit B from Mycoplasma pneumoniae (strain ATCC 29342 / M129 / Subtype 1) (Mycoplasmoides pneumoniae).